Here is a 205-residue protein sequence, read N- to C-terminus: Ypt/Rab-type GTPase Rab7 (205 aa).

Residues 17–23 (SGVGKTS), 33–40 (FSASYKAT), G66, 125–128 (NKID), and 157–159 (SAK) each bind GTP. An Effector region motif is present at residues 37–45 (YKATIGADF). 2 S-geranylgeranyl cysteine lipidation sites follow: C203 and C205. The residue at position 205 (C205) is a Cysteine methyl ester.

This sequence belongs to the small GTPase superfamily. Rab family.

The protein resides in the cell membrane. With respect to regulation, alternates between an inactive form bound to GDP and an active form bound to GTP. Activated by guanine nucleotide-exchange factors (GEFs), and inactivated by GTPase-activating proteins (GAPs). Ypt/Rab-type GTPases are key regulators of membrane trafficking and intracellular vesicular transport. They act as molecular switches that convert between GTP-bound and GDP-bound states, and regulate virtually all steps of membrane traffic from the formation of the transport vesicle at the donor membrane to its fusion at the target membrane. In the GDP-bound state, Ypt proteins are predominantly cytosolic, solubilized through the interaction with a GDP dissociation inhibitor (GDI). In the GTP-bound state, the proteins are membrane bound and interact with specific effector proteins that select cargo, promote vesicle movement, or verify the correct site of fusion. This Neurospora crassa (strain ATCC 24698 / 74-OR23-1A / CBS 708.71 / DSM 1257 / FGSC 987) protein is Ypt/Rab-type GTPase Rab7 (gtp-14).